A 228-amino-acid chain; its full sequence is ATP-dependent dethiobiotin synthetase BioD (228 aa).

ATP is bound at residue 12–17 (DVGKTY). A Mg(2+)-binding site is contributed by Thr-16. Lys-37 is an active-site residue. ATP is bound by residues Asp-53, 114 to 117 (EGMG), 174 to 175 (ND), 203 to 205 (PFI), and Asn-210. 2 residues coordinate Mg(2+): Asp-53 and Glu-114.

Belongs to the dethiobiotin synthetase family. Homodimer. Mg(2+) is required as a cofactor.

It is found in the cytoplasm. The catalysed reaction is (7R,8S)-7,8-diammoniononanoate + CO2 + ATP = (4R,5S)-dethiobiotin + ADP + phosphate + 3 H(+). It functions in the pathway cofactor biosynthesis; biotin biosynthesis; biotin from 7,8-diaminononanoate: step 1/2. Catalyzes a mechanistically unusual reaction, the ATP-dependent insertion of CO2 between the N7 and N8 nitrogen atoms of 7,8-diaminopelargonic acid (DAPA, also called 7,8-diammoniononanoate) to form a ureido ring. The polypeptide is ATP-dependent dethiobiotin synthetase BioD (Nitrosopumilus maritimus (strain SCM1)).